Here is a 340-residue protein sequence, read N- to C-terminus: Flap endonuclease 1 (340 aa).

The N-domain stretch occupies residues 1–98; it reads MGLNLKDLVV…AEIERRKQIK (98 aa). Mg(2+) is bound by residues aspartate 27, aspartate 80, glutamate 152, glutamate 154, aspartate 173, aspartate 175, and aspartate 236. The segment at 116 to 258 is I-domain; the sequence is DARKYAQQTT…TALKMIKQHS (143 aa).

It belongs to the XPG/RAD2 endonuclease family. FEN1 subfamily. Interacts with PCNA. PCNA stimulates the nuclease activity without altering cleavage specificity. Mg(2+) serves as cofactor.

Its function is as follows. Structure-specific nuclease with 5'-flap endonuclease and 5'-3' exonuclease activities involved in DNA replication and repair. During DNA replication, cleaves the 5'-overhanging flap structure that is generated by displacement synthesis when DNA polymerase encounters the 5'-end of a downstream Okazaki fragment. Binds the unpaired 3'-DNA end and kinks the DNA to facilitate 5' cleavage specificity. Cleaves one nucleotide into the double-stranded DNA from the junction in flap DNA, leaving a nick for ligation. Also involved in the base excision repair (BER) pathway. Acts as a genome stabilization factor that prevents flaps from equilibrating into structures that lead to duplications and deletions. Also possesses 5'-3' exonuclease activity on nicked or gapped double-stranded DNA. This is Flap endonuclease 1 from Nitrosopumilus maritimus (strain SCM1).